The primary structure comprises 287 residues: MNIQEYFSRISFDGSHKDADLQTLTAIFQHHIQAIPFENLSMHCGETIDLDLQATYNKIVKKKRGGWCMETNYLLFWALKEMGYDICVLGGNSYEPAKKAYTDEINHILLKVVIKGSSYIVDAGFGGGPYQTWLPMLLISGKDQPQIPGIFRFIEDNGIWYLEKVKRKHYVPEGSVPLTDNPEMGNIRKLYSFTLEPKHIDDFQELNAYLQVAPDTILQKKSICSLQTTDGFYALVGWTFSEMKYKYKEDADLLQTTTLTDEEVEKTLKDKFNIVLENKLIPVNVRG.

Cys68 functions as the Acyl-thioester intermediate in the catalytic mechanism. Catalysis depends on residues His107 and Asp122.

Belongs to the arylamine N-acetyltransferase family.

It carries out the reaction an arylamine + acetyl-CoA = an N-acetylarylamine + CoA. The protein is Arylamine N-acetyltransferase, liver isozyme of Gallus gallus (Chicken).